Reading from the N-terminus, the 219-residue chain is Epididymal secretory glutathione peroxidase (219 aa).

The signal sequence occupies residues 1–21 (MTVQLGAFYLFPLFMAGFVQT). Cysteine 71 is an active-site residue.

Belongs to the glutathione peroxidase family. In terms of assembly, homotetramer. Proximal caput epididymis.

It is found in the secreted. The enzyme catalyses 2 glutathione + H2O2 = glutathione disulfide + 2 H2O. May constitute a glutathione peroxidase-like protective system against peroxide damage in sperm membrane lipids. Since the purified porcine enzyme has very little activity towards hydrogen peroxide or organic hydroperoxides the protective effect is not likely to be exerted by its enzymatic activity. Instead, may protect sperm from premature acrosome reaction in the epididymis by binding to lipid peroxides, which might otherwise interact with phospholipase A2 and induce the acrosome reaction. In Sus scrofa (Pig), this protein is Epididymal secretory glutathione peroxidase (GPX5).